The sequence spans 189 residues: MQVILLQRVAKLGQMGEVVNVKDGYARNFLLPQGKALRANESNIKSFEARKAQLEAQNLETKKEAAAVAEKLDGQSFVVIRSASDSGALYGSVTTRDAAEAATEAGFTVGRGQIVLDRPIKDLGLHTVTVTLHPEVVVKITLNVARSVEEAELQASGKSIQELAAEAEAAADFEIAELFDEIGAASQED.

The protein belongs to the bacterial ribosomal protein bL9 family.

Binds to the 23S rRNA. The sequence is that of Large ribosomal subunit protein bL9 from Cereibacter sphaeroides (strain ATCC 17023 / DSM 158 / JCM 6121 / CCUG 31486 / LMG 2827 / NBRC 12203 / NCIMB 8253 / ATH 2.4.1.) (Rhodobacter sphaeroides).